We begin with the raw amino-acid sequence, 294 residues long: Acetylglutamate kinase (294 aa).

Residues 63–64 (GG), R85, and N188 contribute to the substrate site.

Belongs to the acetylglutamate kinase family. ArgB subfamily.

It is found in the cytoplasm. It catalyses the reaction N-acetyl-L-glutamate + ATP = N-acetyl-L-glutamyl 5-phosphate + ADP. It participates in amino-acid biosynthesis; L-arginine biosynthesis; N(2)-acetyl-L-ornithine from L-glutamate: step 2/4. Catalyzes the ATP-dependent phosphorylation of N-acetyl-L-glutamate. This Methanococcus vannielii (strain ATCC 35089 / DSM 1224 / JCM 13029 / OCM 148 / SB) protein is Acetylglutamate kinase.